Reading from the N-terminus, the 188-residue chain is Probable manganese efflux pump MntP (188 aa).

The next 5 membrane-spanning stretches (helical) occupy residues 3 to 23, 66 to 86, 106 to 128, 143 to 163, and 168 to 188; these read ITAT…ASVG, LEWN…RMII, WLLV…GLAF, ATLI…SIIG, and ILGG…HFHG.

It belongs to the MntP (TC 9.B.29) family.

It is found in the cell inner membrane. In terms of biological role, probably functions as a manganese efflux pump. In Shigella sonnei (strain Ss046), this protein is Probable manganese efflux pump MntP.